The chain runs to 393 residues: MTNSNRIKLTWISFLSYALTGALVIVTGMVMGNIADYFQLPVSSMSNTFTFLNAGILISIFLNAWLMEIIPLKTQLRFGFILMVLAVAGLMFSHSLALFSAAMFVLGLVSGITMSIGTFLITQLYEGRQRGSRLLFTDSFFSMAGMIFPMVAAFLLARSIEWYWVYACIGLVYLAIFILTFGCEFPALGKHAQHSQAPVVKEKWGIGVLFLAVAALCYILGQLGFISWVPEYAKGLGMSLNDAGALVSDFWMSYMFGMWAFSFILRFFDLQRILTVLAGMAAVLMYLFITGTQAHMPWFILTLGFFSSAIYTSIITLGSQQTKVASPKLVNFILTCGTIGTMLTFVVTGPIVAHSGPQAALLTANGLYAVVFVMCFALGFVSRHRQHSAPATH.

Helical transmembrane passes span 11–31, 51–71, 78–98, 101–121, 134–154, 162–182, 206–226, 245–265, 273–293, 298–318, 332–352, and 361–381; these read WISF…GMVM, FLNA…EIIP, FGFI…SLAL, AAMF…TFLI, LLFT…VAAF, WYWV…LTFG, IGVL…LGFI, ALVS…SFIL, ILTV…TGTQ, WFIL…ITLG, FILT…GPIV, and LLTA…LGFV.

This sequence belongs to the major facilitator superfamily. TsgA family.

It localises to the cell inner membrane. The chain is Protein TsgA from Salmonella agona (strain SL483).